Reading from the N-terminus, the 490-residue chain is MNGTMDHPDHPDPDSIKMFVGQVPRSWSEKELRELFEQYGAVYEINVLRDRSQNPPQSKGCCFITFYTRKAALEAQNALHNMKVLPGMHHPIQMKPADSEKNNAVEDRKLFVGMVSKKCNENDIRAMFSQFGQIEESRILRGPDGMSRGCAFVTFTTRSMAQMAIKAMHQAQTMEGCSSPIVVKFADTQKDKEQKRMTQQLQQQMQQLNAASMWGNLAGLSSLAPQYLALLQQTASSGNLNSLSGLHPMGGEYATGMTSGLNAMQLQNLAALAAAASAAQNTPSAGSALTTSSSPLSILTSSGSSPSSNNNSAVNPMASLGALQTLAGATAGLNVGSLAGMAALNGGLGSSLSNGTGSTMEALSQAYSGIQQYAAAALPSLYNQSLLSQQGLGAAGSQKEGPEGANLFIYHLPQEFGDQDLLQMFMPFGNVVSAKVFIDKQTNLSKCFGFVSYDNPVSAQAAIQSMNGFQIGMKRLKVQLKRSKNDSKPY.

RRM domains are found at residues 16 to 99 (IKMF…PADS) and 108 to 188 (RKLF…FADT). The interval 283–312 (PSAGSALTTSSSPLSILTSSGSSPSSNNNS) is disordered. Positions 405-483 (ANLFIYHLPQ…KRLKVQLKRS (79 aa)) constitute an RRM 3 domain.

It belongs to the CELF/BRUNOL family. As to quaternary structure, oligomer. Oligomerization is required for RNA-binding and EDEN-dependent deadenylation. Post-translationally, phosphorylated during oocyte maturation and dephosphorylated following egg activation. Dephosphorylation is calcium dependent and correlates with the increase in the activity of EDEN-dependent deadenylation.

It is found in the nucleus. It localises to the cytoplasm. In terms of biological role, RNA-binding protein implicated in the regulation of several post-transcriptional events. May be involved in pre-mRNA alternative splicing, mRNA translation activation and stability. Mediates the rapid and sequence-specific cytoplasmic deadenylation of EDEN-containing maternal mRNAs following fertilization. Binds to AU-rich sequences (AREs) of jun mRNA. Binds to the embryonic deadenylation element (EDEN) motif localized in the 3'-UTR of maternal mRNAs. Binds to RNA containing several repeats of the consensus sequence 5'-UGU-3'. EDEN-dependent deadenylation is enhanced by the presence of an additional cis element composed of three AUU repeats. This chain is CUGBP Elav-like family member 1 (celf1), found in Xenopus tropicalis (Western clawed frog).